The primary structure comprises 552 residues: Membrane protein insertase YidC (552 aa).

5 consecutive transmembrane segments (helical) span residues 7–24, 364–384, 434–454, 473–493, and 508–528; these read VLWVIFFMSAVMLYDNWQ, WGWAIVLLTVLIKAVFFPLSA, LPVVIQIPVFISLYWVLLASV, PFFILPVLMAVSMFVQTSLNP, and PIAFSVMFFFFPAGLVLYYVV.

It belongs to the OXA1/ALB3/YidC family. Type 1 subfamily. As to quaternary structure, interacts with the Sec translocase complex via SecD. Specifically interacts with transmembrane segments of nascent integral membrane proteins during membrane integration.

Its subcellular location is the cell inner membrane. Functionally, required for the insertion and/or proper folding and/or complex formation of integral membrane proteins into the membrane. Involved in integration of membrane proteins that insert both dependently and independently of the Sec translocase complex, as well as at least some lipoproteins. Aids folding of multispanning membrane proteins. The sequence is that of Membrane protein insertase YidC from Burkholderia cenocepacia (strain HI2424).